We begin with the raw amino-acid sequence, 142 residues long: Large ribosomal subunit protein uL13 (142 aa).

This sequence belongs to the universal ribosomal protein uL13 family. Part of the 50S ribosomal subunit.

This protein is one of the early assembly proteins of the 50S ribosomal subunit, although it is not seen to bind rRNA by itself. It is important during the early stages of 50S assembly. The sequence is that of Large ribosomal subunit protein uL13 from Hahella chejuensis (strain KCTC 2396).